The primary structure comprises 245 residues: UPF0328 protein ECU09_2010 (245 aa).

Belongs to the UPF0328 family.

The sequence is that of UPF0328 protein ECU09_2010 from Encephalitozoon cuniculi (strain GB-M1) (Microsporidian parasite).